The primary structure comprises 468 residues: 3-isopropylmalate dehydratase large subunit (468 aa).

Positions 348, 409, and 412 each coordinate [4Fe-4S] cluster.

It belongs to the aconitase/IPM isomerase family. LeuC type 1 subfamily. In terms of assembly, heterodimer of LeuC and LeuD. [4Fe-4S] cluster is required as a cofactor.

The enzyme catalyses (2R,3S)-3-isopropylmalate = (2S)-2-isopropylmalate. Its pathway is amino-acid biosynthesis; L-leucine biosynthesis; L-leucine from 3-methyl-2-oxobutanoate: step 2/4. Its function is as follows. Catalyzes the isomerization between 2-isopropylmalate and 3-isopropylmalate, via the formation of 2-isopropylmaleate. In Dechloromonas aromatica (strain RCB), this protein is 3-isopropylmalate dehydratase large subunit.